A 117-amino-acid chain; its full sequence is G antigen 12H (117 aa).

The segment at 1 to 117 (MSWRGRSTYY…PEEGEKQSQC (117 aa)) is disordered. Composition is skewed to acidic residues over residues 32-45 (FSDE…EEGE) and 87-96 (ECEDGPDGQE). Positions 103–117 (EEVKTPEEGEKQSQC) are enriched in basic and acidic residues.

This sequence belongs to the GAGE family.

The sequence is that of G antigen 12H (GAGE12H) from Homo sapiens (Human).